A 188-amino-acid polypeptide reads, in one-letter code: Putative 3-methyladenine DNA glycosylase (188 aa).

The protein belongs to the DNA glycosylase MPG family.

This is Putative 3-methyladenine DNA glycosylase from Ehrlichia ruminantium (Cowdria ruminantium).